A 290-amino-acid polypeptide reads, in one-letter code: Small ribosomal subunit biogenesis GTPase RsgA (290 aa).

The region spanning 61-218 is the CP-type G domain; the sequence is SSELLRPAVA…IVDTPGFSTL (158 aa). GTP contacts are provided by residues 110–113 and 161–169; these read NKVD and GPSGAGKST. Residues C243, C248, H250, and C256 each contribute to the Zn(2+) site.

The protein belongs to the TRAFAC class YlqF/YawG GTPase family. RsgA subfamily. As to quaternary structure, monomer. Associates with 30S ribosomal subunit, binds 16S rRNA. Zn(2+) is required as a cofactor.

The protein localises to the cytoplasm. Functionally, one of several proteins that assist in the late maturation steps of the functional core of the 30S ribosomal subunit. Helps release RbfA from mature subunits. May play a role in the assembly of ribosomal proteins into the subunit. Circularly permuted GTPase that catalyzes slow GTP hydrolysis, GTPase activity is stimulated by the 30S ribosomal subunit. The sequence is that of Small ribosomal subunit biogenesis GTPase RsgA from Clostridium botulinum (strain Eklund 17B / Type B).